Here is a 359-residue protein sequence, read N- to C-terminus: MALTLEELVKRFGGEIAGDAQCKVGGLAPLDQAGPQQLAFLANPKYLSQVESTRAGAVLIAPKDLEKLGAAAGGRNFIVTPNPYAYFARVAQMFIDLATPQRAAGVHPSATIDPAAQVAASAVIGPHVTVEAGAVIEDGVQLDANVFVGRGTTIGAGSHLYPNASVYHGCKVGPRAIIHAGAVIGSDGFGFAPDFVGDGDARTGSWVKIPQVGGVTIGPDVEIGANTTIDRGAMADTVIEECVKIDNQVQIGHNCRIGAYTVIAGSAGIAGSTTIGRHCMIGGAAGIAGHVTLGDYVIITAKSGVSKSLPKAGIYTSAFPAVDHGEWNKSAALVRNLDKLRERIKALEAALAAQGGTDA.

His-253 functions as the Proton acceptor in the catalytic mechanism.

This sequence belongs to the transferase hexapeptide repeat family. LpxD subfamily. As to quaternary structure, homotrimer.

The enzyme catalyses a UDP-3-O-[(3R)-3-hydroxyacyl]-alpha-D-glucosamine + a (3R)-hydroxyacyl-[ACP] = a UDP-2-N,3-O-bis[(3R)-3-hydroxyacyl]-alpha-D-glucosamine + holo-[ACP] + H(+). It functions in the pathway bacterial outer membrane biogenesis; LPS lipid A biosynthesis. Functionally, catalyzes the N-acylation of UDP-3-O-acylglucosamine using 3-hydroxyacyl-ACP as the acyl donor. Is involved in the biosynthesis of lipid A, a phosphorylated glycolipid that anchors the lipopolysaccharide to the outer membrane of the cell. This is UDP-3-O-acylglucosamine N-acyltransferase from Burkholderia lata (strain ATCC 17760 / DSM 23089 / LMG 22485 / NCIMB 9086 / R18194 / 383).